Here is a 422-residue protein sequence, read N- to C-terminus: MAFIAALGLLMVGICPAVTYWATADGQLGGHTAVQKDRDHEIQLDSVTLASINTDFAFSLYKKLALENPHKNIVFSPLSISAALALMSLGAKGNTLEEILEGLKFNLPETPEADIHQNFGHLLQMLIQPENQVQINAGNALFIDKHLQILTEFKEKARALYKAEAFTTDFQRPREATKLINDYVRKQTQGKIKELVSDLHRNTSMALVNFLNFQGFWNVTFDPEDTFLGNFTLDRKRTVNVPMMKTEELTTNYFRDEEMQSTVMELNYIGNASFLFILPDQGRIQHVEDSLQPQSLRKWRKSLRPRMLDELSLPKFSLSQDYNLNDILPELGIKEVFSTQADLSGITGAKNIRVSQMIHQAALDVTETHTEADVITIARYNFQSAKIKAKIVKVDREFLYLILDPMFKSISVMGKVINPLTN.

Positions 1 to 17 (MAFIAALGLLMVGICPA) are cleaved as a signal peptide. N-linked (GlcNAc...) asparagine glycosylation is found at N218, N230, and N271. An RCL region spans residues 369–394 (HTEADVITIARYNFQSAKIKAKIVKV).

This sequence belongs to the serpin family.

Its subcellular location is the secreted. The sequence is that of Serine protease inhibitor A3A (Serpina3a) from Mus musculus (Mouse).